Consider the following 84-residue polypeptide: RQC P-site tRNA stabilizing factor (84 aa).

Residues 1 to 64 form the S4 RNA-binding domain; sequence MRIDKFLQSV…IEEYTILQIP (64 aa).

It belongs to the RqcP family. Associates with stalled 50S ribosomal subunits. Binds to RqcH, 23S rRNA and the P-site tRNA. Does not require RqcH for association with 50S subunits.

Key component of the ribosome quality control system (RQC), a ribosome-associated complex that mediates the extraction of incompletely synthesized nascent chains from stalled ribosomes and their subsequent degradation. RqcH recruits Ala-charged tRNA, and with RqcP directs the elongation of stalled nascent chains on 50S ribosomal subunits, leading to non-templated C-terminal alanine extensions (Ala tail). The Ala tail promotes nascent chain degradation. RqcP is associated with the translocation-like movement of the peptidyl-tRNA from the A-site into the P-site. The protein is RQC P-site tRNA stabilizing factor of Helicobacter pylori (strain J99 / ATCC 700824) (Campylobacter pylori J99).